The primary structure comprises 479 residues: Anaerobic nitric oxide reductase flavorubredoxin (479 aa).

The tract at residues 30-210 (LRGSSYNSYL…PFSRLVTPKI (181 aa)) is zinc metallo-hydrolase. Fe cation contacts are provided by histidine 79, glutamate 81, aspartate 83, histidine 147, aspartate 166, and histidine 227. The 140-residue stretch at 254–393 (ITIFYDTMSN…LCRQHGRDIA (140 aa)) folds into the Flavodoxin-like domain. Residues 260 to 264 (TMSNN) and 342 to 369 (AFGSHGWSGGAVDRLSTRLQDAGFEMSL) contribute to the FMN site. The 52-residue stretch at 423-474 (GPKMQCSVCQWIYDPALGEPLQDVAPGTPWSDVPDNFLCPECSLGKDVFDVL) folds into the Rubredoxin-like domain. Positions 428, 431, 461, and 464 each coordinate Fe cation.

The protein in the N-terminal section; belongs to the zinc metallo-hydrolase group 3 family. Homotetramer. It depends on Fe cation as a cofactor. FMN is required as a cofactor.

Its subcellular location is the cytoplasm. The protein operates within nitrogen metabolism; nitric oxide reduction. Its function is as follows. Anaerobic nitric oxide reductase; uses NADH to detoxify nitric oxide (NO), protecting several 4Fe-4S NO-sensitive enzymes. Has at least 2 reductase partners, only one of which (NorW, flavorubredoxin reductase) has been identified. NO probably binds to the di-iron center; electrons enter from the NorW at rubredoxin and are transferred sequentially to the FMN center and the di-iron center. Also able to function as an aerobic oxygen reductase. The chain is Anaerobic nitric oxide reductase flavorubredoxin from Salmonella paratyphi B (strain ATCC BAA-1250 / SPB7).